We begin with the raw amino-acid sequence, 129 residues long: Small ribosomal subunit protein uS11c (129 aa).

Belongs to the universal ribosomal protein uS11 family. As to quaternary structure, part of the 30S ribosomal subunit.

It localises to the plastid. The protein resides in the chloroplast. The polypeptide is Small ribosomal subunit protein uS11c (Cyanidium caldarium (Red alga)).